A 276-amino-acid chain; its full sequence is Light-independent protochlorophyllide reductase iron-sulfur ATP-binding protein (276 aa).

Residues 12 to 17 (GIGKST) and lysine 41 each bind ATP. Serine 16 contacts Mg(2+). [4Fe-4S] cluster contacts are provided by cysteine 97 and cysteine 131. 182–183 (NR) contacts ATP.

The protein belongs to the NifH/BchL/ChlL family. Homodimer. Protochlorophyllide reductase is composed of three subunits; BchL, BchN and BchB. [4Fe-4S] cluster is required as a cofactor.

The enzyme catalyses chlorophyllide a + oxidized 2[4Fe-4S]-[ferredoxin] + 2 ADP + 2 phosphate = protochlorophyllide a + reduced 2[4Fe-4S]-[ferredoxin] + 2 ATP + 2 H2O. The protein operates within porphyrin-containing compound metabolism; bacteriochlorophyll biosynthesis (light-independent). In terms of biological role, component of the dark-operative protochlorophyllide reductase (DPOR) that uses Mg-ATP and reduced ferredoxin to reduce ring D of protochlorophyllide (Pchlide) to form chlorophyllide a (Chlide). This reaction is light-independent. The L component serves as a unique electron donor to the NB-component of the complex, and binds Mg-ATP. The protein is Light-independent protochlorophyllide reductase iron-sulfur ATP-binding protein of Chlorobaculum tepidum (strain ATCC 49652 / DSM 12025 / NBRC 103806 / TLS) (Chlorobium tepidum).